The primary structure comprises 305 residues: UDP-3-O-acyl-N-acetylglucosamine deacetylase (305 aa).

Residues His-79, His-238, and Asp-242 each coordinate Zn(2+). The active-site Proton donor is the His-265.

Belongs to the LpxC family. Zn(2+) serves as cofactor.

It catalyses the reaction a UDP-3-O-[(3R)-3-hydroxyacyl]-N-acetyl-alpha-D-glucosamine + H2O = a UDP-3-O-[(3R)-3-hydroxyacyl]-alpha-D-glucosamine + acetate. It functions in the pathway glycolipid biosynthesis; lipid IV(A) biosynthesis; lipid IV(A) from (3R)-3-hydroxytetradecanoyl-[acyl-carrier-protein] and UDP-N-acetyl-alpha-D-glucosamine: step 2/6. In terms of biological role, catalyzes the hydrolysis of UDP-3-O-myristoyl-N-acetylglucosamine to form UDP-3-O-myristoylglucosamine and acetate, the committed step in lipid A biosynthesis. In Salmonella arizonae (strain ATCC BAA-731 / CDC346-86 / RSK2980), this protein is UDP-3-O-acyl-N-acetylglucosamine deacetylase.